The primary structure comprises 152 residues: uncharacterized protein (152 aa).

This is an uncharacterized protein from Methanocaldococcus jannaschii (strain ATCC 43067 / DSM 2661 / JAL-1 / JCM 10045 / NBRC 100440) (Methanococcus jannaschii).